The following is a 272-amino-acid chain: Formamidopyrimidine-DNA glycosylase (272 aa).

Residue proline 2 is the Schiff-base intermediate with DNA of the active site. The active-site Proton donor is glutamate 3. Residue lysine 58 is the Proton donor; for beta-elimination activity of the active site. DNA-binding residues include histidine 94, arginine 112, and arginine 153. The segment at 238-272 adopts an FPG-type zinc-finger fold; the sequence is FVYDRAGEPCRVCGAPIRQIVQGQRSTYFCPNCQR. Arginine 262 serves as the catalytic Proton donor; for delta-elimination activity.

The protein belongs to the FPG family. Monomer. Requires Zn(2+) as cofactor.

It catalyses the reaction Hydrolysis of DNA containing ring-opened 7-methylguanine residues, releasing 2,6-diamino-4-hydroxy-5-(N-methyl)formamidopyrimidine.. The enzyme catalyses 2'-deoxyribonucleotide-(2'-deoxyribose 5'-phosphate)-2'-deoxyribonucleotide-DNA = a 3'-end 2'-deoxyribonucleotide-(2,3-dehydro-2,3-deoxyribose 5'-phosphate)-DNA + a 5'-end 5'-phospho-2'-deoxyribonucleoside-DNA + H(+). Involved in base excision repair of DNA damaged by oxidation or by mutagenic agents. Acts as a DNA glycosylase that recognizes and removes damaged bases. Has a preference for oxidized purines, such as 7,8-dihydro-8-oxoguanine (8-oxoG). Has AP (apurinic/apyrimidinic) lyase activity and introduces nicks in the DNA strand. Cleaves the DNA backbone by beta-delta elimination to generate a single-strand break at the site of the removed base with both 3'- and 5'-phosphates. The protein is Formamidopyrimidine-DNA glycosylase of Burkholderia mallei (strain NCTC 10229).